Here is a 182-residue protein sequence, read N- to C-terminus: Bifunctional protein PyrR (182 aa).

The PRPP-binding motif lies at 100–112 (VVLVDDVLYTGRT).

The protein belongs to the purine/pyrimidine phosphoribosyltransferase family. PyrR subfamily. In terms of assembly, homodimer and homohexamer; in equilibrium.

It catalyses the reaction UMP + diphosphate = 5-phospho-alpha-D-ribose 1-diphosphate + uracil. In terms of biological role, regulates transcriptional attenuation of the pyrimidine nucleotide (pyr) operon by binding in a uridine-dependent manner to specific sites on pyr mRNA. This disrupts an antiterminator hairpin in the RNA and favors formation of a downstream transcription terminator, leading to a reduced expression of downstream genes. Functionally, also displays a weak uracil phosphoribosyltransferase activity which is not physiologically significant. The polypeptide is Bifunctional protein PyrR (Natranaerobius thermophilus (strain ATCC BAA-1301 / DSM 18059 / JW/NM-WN-LF)).